A 147-amino-acid polypeptide reads, in one-letter code: Phospholipase A2 inhibitor subunit B (147 aa).

One can recognise a C-type lectin domain in the interval 62-143 (EICEEAGGHI…DEKLLVVCEF (82 aa)). 2 cysteine pairs are disulfide-bonded: C64–C141 and C119–C133. The N-linked (GlcNAc...) asparagine glycan is linked to N103.

It belongs to the alpha-type phospholipase A2 inhibitor family. In terms of assembly, homo- or heterotrimer; homotrimer of PLI-A chains, two PLI-A and one PLI-B chains, one PLI-A and two PLI-B chains, and homotrimer of PLI-B chains (with a ratio of 1:3:3:1). Expressed by the liver.

It localises to the secreted. Its function is as follows. PLI binds directly phospholipase A2 in the presence or absence of calcium. Inhibitory activity of the PLI-B homotrimer is less specific than that of the PLI-A homotrimer. The chain is Phospholipase A2 inhibitor subunit B from Protobothrops flavoviridis (Habu).